Here is an 830-residue protein sequence, read N- to C-terminus: MDEFSFPFQPYDIQLNLMREIRQCIEQRKIGIFESPTGTGKSLSVLCSTMTWLEAEELRISTDLSTRLGEVHTKITECDKITTADNWETAVREKMRAQDVETEILEQIQSRERLQSRIDQARRGMVEVSRKRKAPARDTDQFLEPQDEAAPSEEYNNDEKSEKQRDSDFFDDVDEEEEKPLKCLKIFYASRTHSQLEQLAEELAKTRFQPRIVTCASRGTLCVNEEVKKLKLNHLINEKCMELRKNGMSEKEKVQKLEKGTTKKTKTCATSCEFYNSTQIEDVVNGVLSNKLKSTLEVSKQGKLSNGCPYFATRKSVPQCQLVLLPYQVLLHDGTRKAWGIELKDNVIVLDEAHNVLNTISSLYSAEISTKSLTLALRLIREYNAHYKLKLLAHNLLYMKQLESLTSKMLIFLNSQSKEDVMTMAQLARNLNILEINLFKLAEYMEKTDLCKKFHGFYMRLQKEEIKKENEKPKLTGIQKLMAAKEAEPEPEAEPLPPPKPVPSPLFSLKSFIDALTNKCEDGRIIVEKSATEAKFRFMLLNPADRLSEVVTSARATILVGGTMEPAQLLVETLSRGSIGADSIRRFSCCHVIDDSQLLAVTVERTVDGKPFQLTYQTRGADTTLRSLATSIQALIPHIPNGVVIFVPSYDFLFNFQKKMKEFGILKRIEEKKAVFTESRQPTSDVWDRFSRAAKTSKGAILFAVVGGKMSEGINFCDELGRAVIVIGLPYPNKTSVELRERMKFLDTQMPNGGNLLYESLCMHAVNQAIGRAIRHRRDYAAVYLFDDRYAKESTRRKLSTWIGDRTQVKLGFGEIIRKTRSFFEANSKK.

The Helicase ATP-binding domain maps to 1–403; that stretch reads MDEFSFPFQP…HNLLYMKQLE (403 aa). 35 to 42 lines the ATP pocket; the sequence is SPTGTGKS. Basic and acidic residues-rich tracts occupy residues 124–140 and 157–168; these read GMVEVSRKRKAPARDTD and NDEKSEKQRDSD. Positions 124-173 are disordered; the sequence is GMVEVSRKRKAPARDTDQFLEPQDEAAPSEEYNNDEKSEKQRDSDFFDDV. [4Fe-4S] cluster is bound by residues C222, C240, C272, and C308. Residues 351-354 carry the DEAH box motif; it reads DEAH.

This sequence belongs to the DEAD box helicase family. DEAH subfamily. DDX11/CHL1 sub-subfamily. [4Fe-4S] cluster serves as cofactor.

The protein localises to the nucleus. The enzyme catalyses Couples ATP hydrolysis with the unwinding of duplex DNA at the replication fork by translocating in the 5'-3' direction. This creates two antiparallel DNA single strands (ssDNA). The leading ssDNA polymer is the template for DNA polymerase III holoenzyme which synthesizes a continuous strand.. The catalysed reaction is ATP + H2O = ADP + phosphate + H(+). Required for normal cell proliferation and chromosome stability. Plays a role in DNA repair during replication. This is ATP-dependent DNA helicase chl-1 from Caenorhabditis elegans.